The primary structure comprises 513 residues: ATP synthase subunit alpha (513 aa).

An ATP-binding site is contributed by 169–176 (GDRQTGKS).

Belongs to the ATPase alpha/beta chains family. As to quaternary structure, F-type ATPases have 2 components, CF(1) - the catalytic core - and CF(0) - the membrane proton channel. CF(1) has five subunits: alpha(3), beta(3), gamma(1), delta(1), epsilon(1). CF(0) has three main subunits: a(1), b(2) and c(9-12). The alpha and beta chains form an alternating ring which encloses part of the gamma chain. CF(1) is attached to CF(0) by a central stalk formed by the gamma and epsilon chains, while a peripheral stalk is formed by the delta and b chains.

The protein localises to the cell inner membrane. The catalysed reaction is ATP + H2O + 4 H(+)(in) = ADP + phosphate + 5 H(+)(out). In terms of biological role, produces ATP from ADP in the presence of a proton gradient across the membrane. The alpha chain is a regulatory subunit. The polypeptide is ATP synthase subunit alpha (Sodalis glossinidius (strain morsitans)).